The chain runs to 999 residues: Lysosomal alpha-mannosidase (999 aa).

The tract at residues 1 to 25 (MVGDARPSGVRAGGCRGAVGSRTSS) is disordered. A signal peptide spans 1–50 (MVGDARPSGVRAGGCRGAVGSRTSSRALRPPLPPLSSLFVLFLAAPCAWA). Residues His-73 and Asp-75 each contribute to the Zn(2+) site. An N-linked (GlcNAc...) asparagine glycan is attached at Asn-134. Position 197 (Asp-197) interacts with Zn(2+). Asp-197 acts as the Nucleophile in catalysis. Cys-269 and Cys-274 are oxidised to a cystine. N-linked (GlcNAc...) asparagine glycosylation occurs at Asn-369. Position 448 (His-448) interacts with Zn(2+). Cys-495 and Cys-503 are disulfide-bonded. A glycan (N-linked (GlcNAc...) asparagine) is linked at Asn-499. Positions 591–621 (SRDLVIQNEYLRARFDPNTGLLMELENLEQN) are excised as a propeptide. Asn-634, Asn-640, Asn-681, Asn-755, and Asn-919 each carry an N-linked (GlcNAc...) asparagine glycan.

It belongs to the glycosyl hydrolase 38 family. As to quaternary structure, homodimer. It depends on Zn(2+) as a cofactor. In terms of processing, processed into 5 peptides of 35/38 kDa (A), 11/13 kDa (B) and 22 kDa (C), 38 kDa (D) and 13/15 kDa (E). The A, B and C peptides are disulfide-linked into a 67 kDa complex. Heavily glycosylated. Some sugar chains are of the high-mannose type.

The protein localises to the lysosome. It carries out the reaction Hydrolysis of terminal, non-reducing alpha-D-mannose residues in alpha-D-mannosides.. Functionally, necessary for the catabolism of N-linked carbohydrates released during glycoprotein turnover. The protein is Lysosomal alpha-mannosidase (MAN2B1) of Bos taurus (Bovine).